The primary structure comprises 276 residues: Urease accessory protein UreD (276 aa).

This sequence belongs to the UreD family. UreD, UreF and UreG form a complex that acts as a GTP-hydrolysis-dependent molecular chaperone, activating the urease apoprotein by helping to assemble the nickel containing metallocenter of UreC. The UreE protein probably delivers the nickel.

The protein resides in the cytoplasm. Its function is as follows. Required for maturation of urease via the functional incorporation of the urease nickel metallocenter. The sequence is that of Urease accessory protein UreD from Albidiferax ferrireducens (strain ATCC BAA-621 / DSM 15236 / T118) (Rhodoferax ferrireducens).